The following is a 349-amino-acid chain: Ferredoxin--NADP reductase 1 (349 aa).

7 residues coordinate FAD: glutamate 36, lysine 44, tyrosine 48, valine 88, leucine 123, aspartate 290, and serine 331.

The protein belongs to the ferredoxin--NADP reductase type 2 family. Homodimer. Requires FAD as cofactor.

It catalyses the reaction 2 reduced [2Fe-2S]-[ferredoxin] + NADP(+) + H(+) = 2 oxidized [2Fe-2S]-[ferredoxin] + NADPH. The polypeptide is Ferredoxin--NADP reductase 1 (Bacillus licheniformis (strain ATCC 14580 / DSM 13 / JCM 2505 / CCUG 7422 / NBRC 12200 / NCIMB 9375 / NCTC 10341 / NRRL NRS-1264 / Gibson 46)).